The chain runs to 513 residues: 2-isopropylmalate synthase (513 aa).

The region spanning 4–266 (IEFFDTSLRD…KSPLVLAETM (263 aa)) is the Pyruvate carboxyltransferase domain. Residues Asp13, His201, His203, and Asn237 each contribute to the Mn(2+) site. Residues 390–513 (ILNNVQIDGH…VEQISAHDGI (124 aa)) form a regulatory domain region.

Belongs to the alpha-IPM synthase/homocitrate synthase family. LeuA type 1 subfamily. In terms of assembly, homodimer. Mn(2+) serves as cofactor.

It localises to the cytoplasm. It carries out the reaction 3-methyl-2-oxobutanoate + acetyl-CoA + H2O = (2S)-2-isopropylmalate + CoA + H(+). It functions in the pathway amino-acid biosynthesis; L-leucine biosynthesis; L-leucine from 3-methyl-2-oxobutanoate: step 1/4. Its function is as follows. Catalyzes the condensation of the acetyl group of acetyl-CoA with 3-methyl-2-oxobutanoate (2-ketoisovalerate) to form 3-carboxy-3-hydroxy-4-methylpentanoate (2-isopropylmalate). The protein is 2-isopropylmalate synthase of Lactococcus lactis subsp. cremoris (strain SK11).